An 87-amino-acid chain; its full sequence is MAKEELLELDGIVDEVLPDSKYRVTLENGVVVGAYASGRMRKNHIRILAGDRVTLELSMYDLTKGRINFRHKDANSTRPPRSGQPRR.

Residues 1 to 72 form the S1-like domain; sequence MAKEELLELD…TKGRINFRHK (72 aa).

It belongs to the IF-1 family. As to quaternary structure, component of the 30S ribosomal translation pre-initiation complex which assembles on the 30S ribosome in the order IF-2 and IF-3, IF-1 and N-formylmethionyl-tRNA(fMet); mRNA recruitment can occur at any time during PIC assembly.

Its subcellular location is the cytoplasm. One of the essential components for the initiation of protein synthesis. Stabilizes the binding of IF-2 and IF-3 on the 30S subunit to which N-formylmethionyl-tRNA(fMet) subsequently binds. Helps modulate mRNA selection, yielding the 30S pre-initiation complex (PIC). Upon addition of the 50S ribosomal subunit IF-1, IF-2 and IF-3 are released leaving the mature 70S translation initiation complex. This Burkholderia ambifaria (strain ATCC BAA-244 / DSM 16087 / CCUG 44356 / LMG 19182 / AMMD) (Burkholderia cepacia (strain AMMD)) protein is Translation initiation factor IF-1 2.